A 175-amino-acid chain; its full sequence is Large ribosomal subunit protein uL5 (175 aa).

This sequence belongs to the universal ribosomal protein uL5 family. In terms of assembly, part of the 50S ribosomal subunit; contacts the 5S rRNA and probably tRNA. Forms a bridge to the 30S subunit in the 70S ribosome.

In terms of biological role, this is one of the proteins that bind and probably mediate the attachment of the 5S RNA into the large ribosomal subunit, where it forms part of the central protuberance. In the 70S ribosome it contacts protein S13 of the 30S subunit (bridge B1b), connecting the 2 subunits; this bridge is implicated in subunit movement. May contact the P site tRNA; the 5S rRNA and some of its associated proteins might help stabilize positioning of ribosome-bound tRNAs. The chain is Large ribosomal subunit protein uL5 from Halobacterium salinarum (strain ATCC 29341 / DSM 671 / R1).